The chain runs to 189 residues: HGPRTase-like protein 2 (189 aa).

Belongs to the purine/pyrimidine phosphoribosyltransferase family. Archaeal HPRT subfamily.

Functionally, may catalyze a purine salvage reaction, the substrate is unknown. In Halalkalicoccus jeotgali (strain DSM 18796 / CECT 7217 / JCM 14584 / KCTC 4019 / B3), this protein is HGPRTase-like protein 2.